A 166-amino-acid polypeptide reads, in one-letter code: Large ribosomal subunit protein uL10 (166 aa).

Belongs to the universal ribosomal protein uL10 family. As to quaternary structure, part of the ribosomal stalk of the 50S ribosomal subunit. The N-terminus interacts with L11 and the large rRNA to form the base of the stalk. The C-terminus forms an elongated spine to which L12 dimers bind in a sequential fashion forming a multimeric L10(L12)X complex.

Forms part of the ribosomal stalk, playing a central role in the interaction of the ribosome with GTP-bound translation factors. This is Large ribosomal subunit protein uL10 from Staphylococcus epidermidis (strain ATCC 35984 / DSM 28319 / BCRC 17069 / CCUG 31568 / BM 3577 / RP62A).